A 200-amino-acid chain; its full sequence is Holliday junction branch migration complex subunit RuvA (200 aa).

Residues 1 to 63 form a domain I region; it reads MIALLTGQIA…EDAILLYGFR (63 aa). A domain II region spans residues 64–142; it reads TRTEKSFFQL…KLDSGSIPAG (79 aa). A flexible linker region spans residues 143–153; it reads DAVGRSLPAGS. The domain III stretch occupies residues 153–200; it reads SVLDDVSSALVNLGYKDPQVRKVLAELDCAGSASVEEVLKQALKILMK.

It belongs to the RuvA family. Homotetramer. Forms an RuvA(8)-RuvB(12)-Holliday junction (HJ) complex. HJ DNA is sandwiched between 2 RuvA tetramers; dsDNA enters through RuvA and exits via RuvB. An RuvB hexamer assembles on each DNA strand where it exits the tetramer. Each RuvB hexamer is contacted by two RuvA subunits (via domain III) on 2 adjacent RuvB subunits; this complex drives branch migration. In the full resolvosome a probable DNA-RuvA(4)-RuvB(12)-RuvC(2) complex forms which resolves the HJ.

The protein resides in the cytoplasm. Its function is as follows. The RuvA-RuvB-RuvC complex processes Holliday junction (HJ) DNA during genetic recombination and DNA repair, while the RuvA-RuvB complex plays an important role in the rescue of blocked DNA replication forks via replication fork reversal (RFR). RuvA specifically binds to HJ cruciform DNA, conferring on it an open structure. The RuvB hexamer acts as an ATP-dependent pump, pulling dsDNA into and through the RuvAB complex. HJ branch migration allows RuvC to scan DNA until it finds its consensus sequence, where it cleaves and resolves the cruciform DNA. The polypeptide is Holliday junction branch migration complex subunit RuvA (Trichlorobacter lovleyi (strain ATCC BAA-1151 / DSM 17278 / SZ) (Geobacter lovleyi)).